A 450-amino-acid chain; its full sequence is Exodeoxyribonuclease 7 large subunit (450 aa).

This sequence belongs to the XseA family. As to quaternary structure, heterooligomer composed of large and small subunits.

The protein localises to the cytoplasm. The enzyme catalyses Exonucleolytic cleavage in either 5'- to 3'- or 3'- to 5'-direction to yield nucleoside 5'-phosphates.. Functionally, bidirectionally degrades single-stranded DNA into large acid-insoluble oligonucleotides, which are then degraded further into small acid-soluble oligonucleotides. The protein is Exodeoxyribonuclease 7 large subunit of Listeria monocytogenes serovar 1/2a (strain ATCC BAA-679 / EGD-e).